The chain runs to 217 residues: UPF0502 protein Smlt0097 (217 aa).

The protein belongs to the UPF0502 family.

In Stenotrophomonas maltophilia (strain K279a), this protein is UPF0502 protein Smlt0097.